We begin with the raw amino-acid sequence, 418 residues long: NADH-quinone oxidoreductase subunit H (418 aa).

The next 9 helical transmembrane spans lie at 15–35, 83–103, 123–143, 164–184, 197–217, 262–282, 287–307, 321–341, and 349–369; these read LVLGKALAIFVFLMLNVLVAI, FVYFAAPVISTIPAFTAFAFI, LPVAVLFILGLSAIGVYGIVL, VISYEVAMGLSFAAVFLYAGS, VWFVFLLLPSFVIYLISMVGE, LATALFFGGWHAPWPLNMWAG, WWPVLWFTAKMWTFLFIYFWL, GLGWKLLIPASLVWVLIAAVI, and YAHWTPILVISSIVFAAALVL. A disordered region spans residues 394–418; it reads AAHRAGFHPGIPDTAAAGESAGGRE.

The protein belongs to the complex I subunit 1 family. As to quaternary structure, NDH-1 is composed of 14 different subunits. Subunits NuoA, H, J, K, L, M, N constitute the membrane sector of the complex.

It is found in the cell membrane. It catalyses the reaction a quinone + NADH + 5 H(+)(in) = a quinol + NAD(+) + 4 H(+)(out). NDH-1 shuttles electrons from NADH, via FMN and iron-sulfur (Fe-S) centers, to quinones in the respiratory chain. The immediate electron acceptor for the enzyme in this species is believed to be menaquinone. Couples the redox reaction to proton translocation (for every two electrons transferred, four hydrogen ions are translocated across the cytoplasmic membrane), and thus conserves the redox energy in a proton gradient. This subunit may bind ubiquinone. This chain is NADH-quinone oxidoreductase subunit H, found in Mycobacterium avium (strain 104).